The following is a 485-amino-acid chain: Glutamyl-tRNA(Gln) amidotransferase subunit A (485 aa).

Active-site charge relay system residues include K78 and S153. The active-site Acyl-ester intermediate is the S177.

Belongs to the amidase family. GatA subfamily. In terms of assembly, heterotrimer of A, B and C subunits.

It carries out the reaction L-glutamyl-tRNA(Gln) + L-glutamine + ATP + H2O = L-glutaminyl-tRNA(Gln) + L-glutamate + ADP + phosphate + H(+). Allows the formation of correctly charged Gln-tRNA(Gln) through the transamidation of misacylated Glu-tRNA(Gln) in organisms which lack glutaminyl-tRNA synthetase. The reaction takes place in the presence of glutamine and ATP through an activated gamma-phospho-Glu-tRNA(Gln). This chain is Glutamyl-tRNA(Gln) amidotransferase subunit A, found in Bacillus cereus (strain ATCC 10987 / NRS 248).